The sequence spans 167 residues: MASSCPCGANRTYQQCCEIAHNNHADVKTPEQLMRSRYSAHVLGLVDYVVKTYHPSCNAEEQREGIAQSIDSDWCKLEVVKAEAGSHENEGFVEFNAYFNEDGQRYCLSERSRFVKENGLWYYIDGTFPEEESEQDPRLNQSISSLKVGRNDPCICGSGKKFKKCCG.

Belongs to the UPF0225 family.

The polypeptide is UPF0225 protein VP1145 (Vibrio parahaemolyticus serotype O3:K6 (strain RIMD 2210633)).